The sequence spans 432 residues: Serine/threonine-protein phosphatase 2A activator 1 (432 aa).

Residues P322–K432 form a disordered region. Residues T366–A389 are compositionally biased toward basic and acidic residues. Positions T396 to G412 are enriched in low complexity.

This sequence belongs to the PTPA-type PPIase family.

It localises to the cytoplasm. The protein localises to the nucleus. The enzyme catalyses [protein]-peptidylproline (omega=180) = [protein]-peptidylproline (omega=0). In terms of biological role, PPIases accelerate the folding of proteins. It catalyzes the cis-trans isomerization of proline imidic peptide bonds in oligopeptides. Acts as a regulatory subunit for PP2A-like phosphatases modulating their activity or substrate specificity, probably by inducing a conformational change in the catalytic subunit, a direct target of the PPIase. Can reactivate inactive phosphatase PP2A-phosphatase methylesterase complexes (PP2Ai) in presence of ATP and Mg(2+) by dissociating the inactive form from the complex. This is Serine/threonine-protein phosphatase 2A activator 1 (RRD1) from Yarrowia lipolytica (strain CLIB 122 / E 150) (Yeast).